The following is a 51-amino-acid chain: Insulin-1 (51 aa).

3 disulfide bridges follow: C8/C37, C20/C50, and C36/C41.

It belongs to the insulin family. As to quaternary structure, heterodimer of a B chain and an A chain linked by two disulfide bonds.

The protein resides in the secreted. Insulin decreases blood glucose concentration. It increases cell permeability to monosaccharides, amino acids and fatty acids. It accelerates glycolysis, the pentose phosphate cycle, and glycogen synthesis in liver. The chain is Insulin-1 (ins1) from Batrachoididae sp. (Toadfish).